The sequence spans 214 residues: Thiamine-phosphate synthase (214 aa).

4-amino-2-methyl-5-(diphosphooxymethyl)pyrimidine is bound by residues 37–41 (QYREK) and Asn-73. Asp-74 and Asp-93 together coordinate Mg(2+). A 4-amino-2-methyl-5-(diphosphooxymethyl)pyrimidine-binding site is contributed by Ser-112. A 2-[(2R,5Z)-2-carboxy-4-methylthiazol-5(2H)-ylidene]ethyl phosphate-binding site is contributed by 139 to 141 (TIS). Position 142 (Lys-142) interacts with 4-amino-2-methyl-5-(diphosphooxymethyl)pyrimidine. Residues Gly-171 and 191 to 192 (IS) each bind 2-[(2R,5Z)-2-carboxy-4-methylthiazol-5(2H)-ylidene]ethyl phosphate.

It belongs to the thiamine-phosphate synthase family. Mg(2+) serves as cofactor.

It catalyses the reaction 2-[(2R,5Z)-2-carboxy-4-methylthiazol-5(2H)-ylidene]ethyl phosphate + 4-amino-2-methyl-5-(diphosphooxymethyl)pyrimidine + 2 H(+) = thiamine phosphate + CO2 + diphosphate. The enzyme catalyses 2-(2-carboxy-4-methylthiazol-5-yl)ethyl phosphate + 4-amino-2-methyl-5-(diphosphooxymethyl)pyrimidine + 2 H(+) = thiamine phosphate + CO2 + diphosphate. It carries out the reaction 4-methyl-5-(2-phosphooxyethyl)-thiazole + 4-amino-2-methyl-5-(diphosphooxymethyl)pyrimidine + H(+) = thiamine phosphate + diphosphate. It participates in cofactor biosynthesis; thiamine diphosphate biosynthesis; thiamine phosphate from 4-amino-2-methyl-5-diphosphomethylpyrimidine and 4-methyl-5-(2-phosphoethyl)-thiazole: step 1/1. Its function is as follows. Condenses 4-methyl-5-(beta-hydroxyethyl)thiazole monophosphate (THZ-P) and 2-methyl-4-amino-5-hydroxymethyl pyrimidine pyrophosphate (HMP-PP) to form thiamine monophosphate (TMP). The chain is Thiamine-phosphate synthase from Listeria monocytogenes serotype 4a (strain HCC23).